Consider the following 421-residue polypeptide: MAAGFGRCCRVLRSISRFHWRSQHTKANRQREPGLGFSFEFTEQQKEFQATARKFAREEIIPVAAEYDKTGEYPVPLIRRAWELGLMNTHIPENCGGLGLGTFDACLISEELAYGCTGVQTAIEGNSLGQMPIIIAGNDQQKKKYLGRMTEEPLMCAYCVTEPGAGSDVAGIKTKAEKKGDEYIINGQKMWITNGGKANWYFLLARSDPDPKAPANKAFTGFIVEADTPGIQIGRKELNMGQRCSDTRGIVFEDVKVPKENVLIGDGAGFKVAMGAFDKTRPVVAAGAVGLAQRALDEATKYALERKTFGKLLVEHQAISFMLAEMAMKVELARMSYQRAAWEVDSGRRNTYYASIAKAFAGDIANQLATDAVQILGGNGFNTEYPVEKLMRDAKIYQIYEGTSQIQRLIVAREHIDKYKN.

Residues 1–25 (MAAGFGRCCRVLRSISRFHWRSQHT) constitute a mitochondrion transit peptide. Position 69 is an N6-acetyllysine; alternate (K69). Residue K69 is modified to N6-succinyllysine; alternate. 158-167 (YCVTEPGAGS) is an FAD binding site. S167 serves as a coordination point for octanoyl-CoA. K179 is modified (N6-succinyllysine). 191 to 193 (WIT) is an FAD binding site. K212, K217, K259, and K271 each carry N6-acetyllysine; alternate. An N6-succinyllysine; alternate mark is found at K212, K217, K259, and K271. D278 contributes to the octanoyl-CoA binding site. Position 279 is an N6-acetyllysine (K279). R281 contributes to the octanoyl-CoA binding site. K301 is subject to N6-acetyllysine. FAD is bound by residues 306 to 308 (RKT) and 316 to 317 (HQ). Phosphothreonine is present on T351. FAD-binding positions include 374 to 378 (QILGG) and 401 to 405 (EGTSQ). E401 provides a ligand contact to octanoyl-CoA. E401 (proton acceptor) is an active-site residue.

The protein belongs to the acyl-CoA dehydrogenase family. In terms of assembly, homotetramer. Interacts with the heterodimeric electron transfer flavoprotein ETF. It depends on FAD as a cofactor. In terms of processing, acetylated. Could occur at proximity of the cofactor-binding sites and reduce the catalytic activity. Could be deacetylated by SIRT3.

It is found in the mitochondrion matrix. The enzyme catalyses a medium-chain 2,3-saturated fatty acyl-CoA + oxidized [electron-transfer flavoprotein] + H(+) = a medium-chain (2E)-enoyl-CoA + reduced [electron-transfer flavoprotein]. It catalyses the reaction pentanoyl-CoA + oxidized [electron-transfer flavoprotein] + H(+) = (2E)-pentenoyl-CoA + reduced [electron-transfer flavoprotein]. The catalysed reaction is hexanoyl-CoA + oxidized [electron-transfer flavoprotein] + H(+) = (2E)-hexenoyl-CoA + reduced [electron-transfer flavoprotein]. It carries out the reaction octanoyl-CoA + oxidized [electron-transfer flavoprotein] + H(+) = (2E)-octenoyl-CoA + reduced [electron-transfer flavoprotein]. The enzyme catalyses decanoyl-CoA + oxidized [electron-transfer flavoprotein] + H(+) = (2E)-decenoyl-CoA + reduced [electron-transfer flavoprotein]. It catalyses the reaction dodecanoyl-CoA + oxidized [electron-transfer flavoprotein] + H(+) = (2E)-dodecenoyl-CoA + reduced [electron-transfer flavoprotein]. The catalysed reaction is tetradecanoyl-CoA + oxidized [electron-transfer flavoprotein] + H(+) = (2E)-tetradecenoyl-CoA + reduced [electron-transfer flavoprotein]. It carries out the reaction oxidized [electron-transfer flavoprotein] + hexadecanoyl-CoA + H(+) = (2E)-hexadecenoyl-CoA + reduced [electron-transfer flavoprotein]. It participates in lipid metabolism; mitochondrial fatty acid beta-oxidation. Functionally, medium-chain specific acyl-CoA dehydrogenase is one of the acyl-CoA dehydrogenases that catalyze the first step of mitochondrial fatty acid beta-oxidation, an aerobic process breaking down fatty acids into acetyl-CoA and allowing the production of energy from fats. The first step of fatty acid beta-oxidation consists in the removal of one hydrogen from C-2 and C-3 of the straight-chain fatty acyl-CoA thioester, resulting in the formation of trans-2-enoyl-CoA. Electron transfer flavoprotein (ETF) is the electron acceptor that transfers electrons to the main mitochondrial respiratory chain via ETF-ubiquinone oxidoreductase (ETF dehydrogenase). Among the different mitochondrial acyl-CoA dehydrogenases, medium-chain specific acyl-CoA dehydrogenase acts specifically on acyl-CoAs with saturated 6 to 12 carbons long primary chains. The polypeptide is Medium-chain specific acyl-CoA dehydrogenase, mitochondrial (Homo sapiens (Human)).